Reading from the N-terminus, the 276-residue chain is 2,3,4,5-tetrahydropyridine-2,6-dicarboxylate N-succinyltransferase (276 aa).

The substrate site is built by R108 and D145.

Belongs to the transferase hexapeptide repeat family. As to quaternary structure, homotrimer.

The protein localises to the cytoplasm. The enzyme catalyses (S)-2,3,4,5-tetrahydrodipicolinate + succinyl-CoA + H2O = (S)-2-succinylamino-6-oxoheptanedioate + CoA. It functions in the pathway amino-acid biosynthesis; L-lysine biosynthesis via DAP pathway; LL-2,6-diaminopimelate from (S)-tetrahydrodipicolinate (succinylase route): step 1/3. This Caulobacter vibrioides (strain ATCC 19089 / CIP 103742 / CB 15) (Caulobacter crescentus) protein is 2,3,4,5-tetrahydropyridine-2,6-dicarboxylate N-succinyltransferase.